A 42-amino-acid chain; its full sequence is Conotoxin Au11.6 (42 aa).

4 cysteine pairs are disulfide-bonded: C6-C20, C13-C25, C19-C30, and C24-C37.

It belongs to the conotoxin I1 superfamily. In terms of tissue distribution, expressed by the venom duct.

It localises to the secreted. In Conus aulicus (Princely cone), this protein is Conotoxin Au11.6.